A 102-amino-acid chain; its full sequence is Small ribosomal subunit protein uS10 (102 aa).

Belongs to the universal ribosomal protein uS10 family. Part of the 30S ribosomal subunit.

In terms of biological role, involved in the binding of tRNA to the ribosomes. The sequence is that of Small ribosomal subunit protein uS10 from Geobacter metallireducens (strain ATCC 53774 / DSM 7210 / GS-15).